Here is a 209-residue protein sequence, read N- to C-terminus: Thiamine-phosphate synthase (209 aa).

4-amino-2-methyl-5-(diphosphooxymethyl)pyrimidine is bound by residues 37–41 and Asn-69; that span reads QYRDK. Residues Asp-70 and Asp-89 each contribute to the Mg(2+) site. Position 108 (Ser-108) interacts with 4-amino-2-methyl-5-(diphosphooxymethyl)pyrimidine. 135–137 serves as a coordination point for 2-[(2R,5Z)-2-carboxy-4-methylthiazol-5(2H)-ylidene]ethyl phosphate; that stretch reads SPT. Residue Lys-138 coordinates 4-amino-2-methyl-5-(diphosphooxymethyl)pyrimidine. Residues Gly-165 and 185–186 contribute to the 2-[(2R,5Z)-2-carboxy-4-methylthiazol-5(2H)-ylidene]ethyl phosphate site; that span reads VS.

This sequence belongs to the thiamine-phosphate synthase family. Mg(2+) serves as cofactor.

It catalyses the reaction 2-[(2R,5Z)-2-carboxy-4-methylthiazol-5(2H)-ylidene]ethyl phosphate + 4-amino-2-methyl-5-(diphosphooxymethyl)pyrimidine + 2 H(+) = thiamine phosphate + CO2 + diphosphate. The enzyme catalyses 2-(2-carboxy-4-methylthiazol-5-yl)ethyl phosphate + 4-amino-2-methyl-5-(diphosphooxymethyl)pyrimidine + 2 H(+) = thiamine phosphate + CO2 + diphosphate. It carries out the reaction 4-methyl-5-(2-phosphooxyethyl)-thiazole + 4-amino-2-methyl-5-(diphosphooxymethyl)pyrimidine + H(+) = thiamine phosphate + diphosphate. The protein operates within cofactor biosynthesis; thiamine diphosphate biosynthesis; thiamine phosphate from 4-amino-2-methyl-5-diphosphomethylpyrimidine and 4-methyl-5-(2-phosphoethyl)-thiazole: step 1/1. Condenses 4-methyl-5-(beta-hydroxyethyl)thiazole monophosphate (THZ-P) and 2-methyl-4-amino-5-hydroxymethyl pyrimidine pyrophosphate (HMP-PP) to form thiamine monophosphate (TMP). The chain is Thiamine-phosphate synthase from Halorhodospira halophila (strain DSM 244 / SL1) (Ectothiorhodospira halophila (strain DSM 244 / SL1)).